We begin with the raw amino-acid sequence, 260 residues long: Pyridoxine 5'-phosphate synthase (260 aa).

Asn-15 is a binding site for 3-amino-2-oxopropyl phosphate. 17–18 (DH) contributes to the 1-deoxy-D-xylulose 5-phosphate binding site. Arg-26 contacts 3-amino-2-oxopropyl phosphate. Catalysis depends on His-51, which acts as the Proton acceptor. Positions 53 and 58 each coordinate 1-deoxy-D-xylulose 5-phosphate. Glu-78 acts as the Proton acceptor in catalysis. Thr-108 serves as a coordination point for 1-deoxy-D-xylulose 5-phosphate. Catalysis depends on His-199, which acts as the Proton donor. Residues Gly-200 and 221–222 (GH) contribute to the 3-amino-2-oxopropyl phosphate site.

The protein belongs to the PNP synthase family. Homooctamer; tetramer of dimers.

It is found in the cytoplasm. It carries out the reaction 3-amino-2-oxopropyl phosphate + 1-deoxy-D-xylulose 5-phosphate = pyridoxine 5'-phosphate + phosphate + 2 H2O + H(+). It functions in the pathway cofactor biosynthesis; pyridoxine 5'-phosphate biosynthesis; pyridoxine 5'-phosphate from D-erythrose 4-phosphate: step 5/5. Its function is as follows. Catalyzes the complicated ring closure reaction between the two acyclic compounds 1-deoxy-D-xylulose-5-phosphate (DXP) and 3-amino-2-oxopropyl phosphate (1-amino-acetone-3-phosphate or AAP) to form pyridoxine 5'-phosphate (PNP) and inorganic phosphate. The protein is Pyridoxine 5'-phosphate synthase of Cupriavidus necator (strain ATCC 17699 / DSM 428 / KCTC 22496 / NCIMB 10442 / H16 / Stanier 337) (Ralstonia eutropha).